A 485-amino-acid chain; its full sequence is Cysteine--tRNA ligase (485 aa).

Residue cysteine 29 coordinates Zn(2+). The short motif at 31–41 is the 'HIGH' region element; sequence ATVQGMPHVGH. Residues 174–198 form a disordered region; it reads QRVEDMQDAPDADPRGKRDPHDFAL. The span at 185–197 shows a compositional bias: basic and acidic residues; sequence ADPRGKRDPHDFA. Positions 227, 252, and 256 each coordinate Zn(2+). The 'KMSKS' region signature appears at 283 to 287; the sequence is KMSKS. An ATP-binding site is contributed by lysine 286.

This sequence belongs to the class-I aminoacyl-tRNA synthetase family. As to quaternary structure, monomer. The cofactor is Zn(2+).

Its subcellular location is the cytoplasm. It carries out the reaction tRNA(Cys) + L-cysteine + ATP = L-cysteinyl-tRNA(Cys) + AMP + diphosphate. In Micrococcus luteus (strain ATCC 4698 / DSM 20030 / JCM 1464 / CCM 169 / CCUG 5858 / IAM 1056 / NBRC 3333 / NCIMB 9278 / NCTC 2665 / VKM Ac-2230) (Micrococcus lysodeikticus), this protein is Cysteine--tRNA ligase.